The sequence spans 626 residues: tRNA uridine 5-carboxymethylaminomethyl modification enzyme MnmG (626 aa).

13–18 serves as a coordination point for FAD; the sequence is GGGHAG. 273 to 287 provides a ligand contact to NAD(+); that stretch reads GPRYCPSIEDKIHRF.

This sequence belongs to the MnmG family. Homodimer. Heterotetramer of two MnmE and two MnmG subunits. It depends on FAD as a cofactor.

It localises to the cytoplasm. Functionally, NAD-binding protein involved in the addition of a carboxymethylaminomethyl (cmnm) group at the wobble position (U34) of certain tRNAs, forming tRNA-cmnm(5)s(2)U34. The polypeptide is tRNA uridine 5-carboxymethylaminomethyl modification enzyme MnmG (Acinetobacter baumannii (strain SDF)).